The primary structure comprises 290 residues: Pyridoxal kinase PdxY (290 aa).

Substrate is bound by residues S12 and 47–48 (TQ). ATP contacts are provided by residues D114, E151, K184, and 211–214 (RPLL). Residue D225 participates in substrate binding.

Belongs to the pyridoxine kinase family. PdxY subfamily. In terms of assembly, homodimer. Mg(2+) serves as cofactor.

It catalyses the reaction pyridoxal + ATP = pyridoxal 5'-phosphate + ADP + H(+). It participates in cofactor metabolism; pyridoxal 5'-phosphate salvage; pyridoxal 5'-phosphate from pyridoxal: step 1/1. Its function is as follows. Pyridoxal kinase involved in the salvage pathway of pyridoxal 5'-phosphate (PLP). Catalyzes the phosphorylation of pyridoxal to PLP. This chain is Pyridoxal kinase PdxY, found in Pseudomonas putida (strain ATCC 47054 / DSM 6125 / CFBP 8728 / NCIMB 11950 / KT2440).